The following is a 183-amino-acid chain: Translation initiation factor IF-3 (183 aa).

The protein belongs to the IF-3 family. As to quaternary structure, monomer.

The protein localises to the cytoplasm. IF-3 binds to the 30S ribosomal subunit and shifts the equilibrium between 70S ribosomes and their 50S and 30S subunits in favor of the free subunits, thus enhancing the availability of 30S subunits on which protein synthesis initiation begins. This Pseudomonas putida (strain W619) protein is Translation initiation factor IF-3.